The sequence spans 198 residues: Nuclear transcription factor Y subunit A-4 (198 aa).

Residues 1 to 47 form a disordered region; it reads MTSSVHELSDNNESHAKKERPDSQTRPQVPSGRSSESIDTNSVYSEP. Over residues 7-23 the composition is skewed to basic and acidic residues; it reads ELSDNNESHAKKERPDS. A compositionally biased stretch (polar residues) spans 24 to 44; the sequence is QTRPQVPSGRSSESIDTNSVY. Residues 101–124 carry the Subunit association domain (SAD) motif; it reads FVNAKQYHGILRRRQSRAKLEARN. The segment at residues 131–156 is a DNA-binding region (NFYA/HAP2-type); that stretch reads KPYMHESRHLHAIRRPRGCGGRFLNA. Residues 136-198 are disordered; that stretch reads ESRHLHAIRR…MATSGPNGRS (63 aa). Over residues 156–166 the composition is skewed to basic and acidic residues; sequence AKKENGDHKEE.

This sequence belongs to the NFYA/HAP2 subunit family. Heterotrimeric transcription factor composed of three components, NF-YA, NF-YB and NF-YC. NF-YB and NF-YC must interact and dimerize for NF-YA association and DNA binding. Expressed in stems, caulines, and senescent flowers.

The protein resides in the nucleus. Functionally, stimulates the transcription of various genes by recognizing and binding to a CCAAT motif in promoters. The polypeptide is Nuclear transcription factor Y subunit A-4 (NFYA4) (Arabidopsis thaliana (Mouse-ear cress)).